The primary structure comprises 129 residues: MKLLIGILFCTLIMGVTGDSWYSFFKEAVQGASDLWRAYWDMRDANVQNSGRYFRARGNYEAAQRGPGGVWAAKIISNVGEYLQGFLYQIYLGDSYGLEDQVSNRRAEEWGRSGQDPDHFRPAGLPKKY.

An N-terminal signal peptide occupies residues 1 to 18 (MKLLIGILFCTLIMGVTG). Residues 107-121 (AEEWGRSGQDPDHFR) show a composition bias toward basic and acidic residues. The tract at residues 107–129 (AEEWGRSGQDPDHFRPAGLPKKY) is disordered.

This sequence belongs to the SAA family. In terms of assembly, apolipoprotein of the HDL complex.

It is found in the secreted. Major acute phase reactant. This chain is Serum amyloid A-4 protein, found in Bos taurus (Bovine).